We begin with the raw amino-acid sequence, 357 residues long: Heat-inducible transcription repressor HrcA (357 aa).

Belongs to the HrcA family.

In terms of biological role, negative regulator of class I heat shock genes (grpE-dnaK-dnaJ and groELS operons). Prevents heat-shock induction of these operons. The protein is Heat-inducible transcription repressor HrcA of Anabaena sp. (strain L31).